Reading from the N-terminus, the 477-residue chain is Glutamate--tRNA ligase (477 aa).

The 'HIGH' region signature appears at 8-18 (PSPTGTLHIGT). Positions 247–251 (KLSKR) match the 'KMSKS' region motif. Lys-250 is a binding site for ATP.

The protein belongs to the class-I aminoacyl-tRNA synthetase family. Glutamate--tRNA ligase type 1 subfamily. Monomer.

It is found in the cytoplasm. The catalysed reaction is tRNA(Glu) + L-glutamate + ATP = L-glutamyl-tRNA(Glu) + AMP + diphosphate. Functionally, catalyzes the attachment of glutamate to tRNA(Glu) in a two-step reaction: glutamate is first activated by ATP to form Glu-AMP and then transferred to the acceptor end of tRNA(Glu). This Parasynechococcus marenigrum (strain WH8102) protein is Glutamate--tRNA ligase.